The sequence spans 465 residues: GTPase Der (465 aa).

2 EngA-type G domains span residues 3–167 (PLVA…PEEG) and 179–352 (VRIA…ASAT). GTP contacts are provided by residues 9–16 (GRPNVGKS), 57–61 (DTGGI), 119–122 (NKID), 185–192 (GRPNVGKS), 232–236 (DTAGL), and 297–300 (NKWD). One can recognise a KH-like domain in the interval 353–437 (HEFSTSEVNQ…PVRFIFREGA (85 aa)).

This sequence belongs to the TRAFAC class TrmE-Era-EngA-EngB-Septin-like GTPase superfamily. EngA (Der) GTPase family. In terms of assembly, associates with the 50S ribosomal subunit.

GTPase that plays an essential role in the late steps of ribosome biogenesis. The sequence is that of GTPase Der from Xanthomonas campestris pv. campestris (strain 8004).